Reading from the N-terminus, the 1534-residue chain is Dicer-like protein 1 (1534 aa).

The segment at 36-70 (PSAEPGVEHDQISPGESDEEIEENISDQNNSSSQK) is disordered. Over residues 51–60 (ESDEEIEENI) the composition is skewed to acidic residues. The region spanning 130–311 (LFERAKAQNT…AAATRLETLL (182 aa)) is the Helicase ATP-binding domain. 143–150 (LDTGSGKT) is a binding site for ATP. Residues 256–259 (DEAH) carry the DEAH box motif. The 158-residue stretch at 456–613 (ELSKHFSHAP…FCETLPEDRI (158 aa)) folds into the Helicase C-terminal domain. Residues 648–738 (AIAILARYAS…KSIYHKRLPA (91 aa)) enclose the Dicer dsRNA-binding fold domain. Positions 888–1016 (KTVTFVQEND…ICAEPLKISA (129 aa)) constitute a PAZ domain. RNase III domains lie at 1054 to 1199 (SDYA…LSGG) and 1250 to 1402 (ALQV…VDSD). Residues Glu-1291, Asp-1388, and Glu-1391 each coordinate Mg(2+). In terms of domain architecture, DRBM spans 1436-1504 (TFLHNRLANE…SERALVVLDG (69 aa)). Positions 1448, 1475, 1516, and 1518 each coordinate Zn(2+).

It belongs to the helicase family. Dicer subfamily. Mg(2+) serves as cofactor. The cofactor is Mn(2+).

Its function is as follows. Dicer-like endonuclease involved in cleaving double-stranded RNA in the RNA interference (RNAi) pathway. Produces 21 to 25 bp dsRNAs (siRNAs) which target the selective destruction of homologous RNAs leading to sequence-specific suppression of gene expression, called post-transcriptional gene silencing (PTGS). Part of a broad host defense response against viral infection and transposons. The polypeptide is Dicer-like protein 1 (dcl1) (Aspergillus clavatus (strain ATCC 1007 / CBS 513.65 / DSM 816 / NCTC 3887 / NRRL 1 / QM 1276 / 107)).